Here is a 312-residue protein sequence, read N- to C-terminus: Serine/threonine-protein phosphatase PP1 isozyme 2 (312 aa).

Ala2 carries the post-translational modification N-acetylalanine. Asp70, His72, Asp98, and Asn130 together coordinate Mn(2+). The Proton donor role is filled by His131. Residues His179 and His254 each coordinate Mn(2+).

It belongs to the PPP phosphatase family. PP-1 subfamily. Interacts with SRK2D/SNRK2.2 and SRK2E/SNRK2.6. The cofactor is Mn(2+).

The protein localises to the nucleus. It is found in the cytoplasm. It catalyses the reaction O-phospho-L-seryl-[protein] + H2O = L-seryl-[protein] + phosphate. It carries out the reaction O-phospho-L-threonyl-[protein] + H2O = L-threonyl-[protein] + phosphate. Its activity is regulated as follows. Phosphatase activity is strongly reduced by the protein phosphatase inhibitor 2 (I-2). In terms of biological role, serine/threonine-protein phosphatase that possesses phosphatase activity toward para-nitrophenyl phosphate (pNPP) in vitro. The polypeptide is Serine/threonine-protein phosphatase PP1 isozyme 2 (Arabidopsis thaliana (Mouse-ear cress)).